The following is a 206-amino-acid chain: Homoserine/homoserine lactone efflux protein (206 aa).

6 helical membrane passes run 5-25 (WWFAYLLTSTLLSLSPGSGAI), 45-65 (GLQTGLGIHIVLVGVGLGTLF), 68-88 (SLIAFEILKWAGAAYLIWLGI), 117-137 (FVNLTNPKSIVFLAALFPQFI), 148-168 (LILGVTTIVVDMIVMTGYATL), and 182-202 (MKALNKAFGSLFMLVGALLAS).

This sequence belongs to the Rht family.

The protein localises to the cell membrane. In terms of biological role, conducts the efflux of homoserine and homoserine lactone. The chain is Homoserine/homoserine lactone efflux protein (rhtB) from Salmonella typhi.